Consider the following 557-residue polypeptide: MDFKKTILWAVFSLSGLMLYNNWQVHEGKPSMFGGAPATTASAPNKSGAPAKLDTPVAISGIPSVTQTPTANSAPVESTQKFVLENELLSVEISAAGANVVDAKLLKELTADQKPVEIFQHTPTHTYVARSGLVAVGNTDLPNHTSLFKLDRSGKDGSGRPFLVLSSERNGVKLEKTFLLNPGSYDIYVGHRVTQVTPNGAPLILYTEIVRDGSEEKKIGPFGGAFSASTFTGPAIYTDGGKYKKVSFADIEKNKFTAPSQIAAGQPGWVAMVQHYFASAWIPDDKLPRDIYSGKIDNDLYRVGMQTQLGTIATGTTVMANAQLFVGPQEERMLETIAPGLELLKDYGYLTILAKPIFWLLEHIHNIVGNWGWSIILLTVLIKLAFFPLSAASYKSMARMKEVQPRLAAMKEQYKGEPQKLNQAMMEMYRKEKINPLGGCLPVVIQIPVFISLYWVLLSSVEMRGAPWILWIHDLSVPDPYYILPVVMAVSMFVQTKLNPTPPDPVQAKVMMYMPIVFSIMFFFFPAGLVLYWVTNNLLSIAQQWQINRLFGKKPAK.

5 helical membrane-spanning segments follow: residues 6–26 (TILW…WQVH), 219–239 (IGPF…IYTD), 367–387 (IVGN…LAFF), 437–457 (LGGC…YWVL), and 514–534 (MPIV…LYWV).

Belongs to the OXA1/ALB3/YidC family. Type 1 subfamily. As to quaternary structure, interacts with the Sec translocase complex via SecD. Specifically interacts with transmembrane segments of nascent integral membrane proteins during membrane integration.

It is found in the cell inner membrane. Its function is as follows. Required for the insertion and/or proper folding and/or complex formation of integral membrane proteins into the membrane. Involved in integration of membrane proteins that insert both dependently and independently of the Sec translocase complex, as well as at least some lipoproteins. Aids folding of multispanning membrane proteins. The polypeptide is Membrane protein insertase YidC (Polynucleobacter asymbioticus (strain DSM 18221 / CIP 109841 / QLW-P1DMWA-1) (Polynucleobacter necessarius subsp. asymbioticus)).